We begin with the raw amino-acid sequence, 390 residues long: Peroxisomal sarcosine oxidase (390 aa).

9–39 (DAIVIGAGIQGCFTAYHLAKHSKSVLLLEQF) provides a ligand contact to FAD. N6-acetyllysine is present on residues Lys126 and Lys287. An S-8alpha-FAD cysteine modification is found at Cys319. The Microbody targeting signal motif lies at 388-390 (AHL).

Belongs to the MSOX/MTOX family. FAD is required as a cofactor. Kidney and liver.

It is found in the peroxisome. It catalyses the reaction sarcosine + O2 + H2O = formaldehyde + glycine + H2O2. The enzyme catalyses L-pipecolate + O2 = L-1-piperideine-6-carboxylate + H2O2 + H(+). Its function is as follows. Metabolizes sarcosine, L-pipecolic acid and L-proline. The protein is Peroxisomal sarcosine oxidase (Pipox) of Mus musculus (Mouse).